The sequence spans 638 residues: Sodium- and chloride-dependent glycine transporter 1 (638 aa).

The disordered stretch occupies residues 1 to 29 (MAAAQGPVAPSSLEQNGAVPSEATKKDQN). The Cytoplasmic portion of the chain corresponds to 1 to 40 (MAAAQGPVAPSSLEQNGAVPSEATKKDQNLKRGNWGNQIE). Transmembrane regions (helical) follow at residues 41-61 (FVLT…FPYL), 69-88 (AFMF…LFFM), and 112-132 (GVGY…NVVI). Residues 133–219 (CIAFYYFFSS…DDIGNFGEVR (87 aa)) are Extracellular-facing. Residues asparagine 169, asparagine 172, asparagine 182, and asparagine 188 are each glycosylated (N-linked (GlcNAc...) asparagine). A run of 9 helical transmembrane segments spans residues 220 to 238 (LPLL…LCLI), 247 to 264 (VVYF…ILFI), 300 to 317 (IFYS…MASY), 329 to 350 (VIIS…FSIL), 383 to 402 (LPIS…LLGL), 431 to 449 (YVTL…PLTS), 465 to 485 (SFSL…IYGH), 506 to 525 (ICWR…FSVI), and 544 to 562 (IGFL…YALF). Residues 563-638 (QFCRTDGDTL…GSSRFQDSRI (76 aa)) are Cytoplasmic-facing. The tract at residues 597–638 (RYAPTTTPSPEDGLEVQPLHPDKAQIPMVGSNGSSRFQDSRI) is disordered. Position 603 is a phosphothreonine (threonine 603). Serine 605 and serine 630 each carry phosphoserine. The essential for interaction with EXOC1 stretch occupies residues 627-638 (SNGSSRFQDSRI). A compositionally biased stretch (polar residues) spans 627–638 (SNGSSRFQDSRI).

It belongs to the sodium:neurotransmitter symporter (SNF) (TC 2.A.22) family. SLC6A9 subfamily. Interacts with EXOC1; interaction increases the transporter capacity of SLC6A9 probably by promoting its insertion into the cell membrane. Interacts with EXOC3 and EXOC4.

The protein localises to the cell membrane. It carries out the reaction glycine(out) + chloride(out) + 2 Na(+)(out) = glycine(in) + chloride(in) + 2 Na(+)(in). Functionally, sodium- and chloride-dependent glycine transporter which is essential for regulating glycine concentrations at inhibitory glycinergic synapses. The chain is Sodium- and chloride-dependent glycine transporter 1 (SLC6A9) from Bos taurus (Bovine).